We begin with the raw amino-acid sequence, 506 residues long: Protein P7 (506 aa).

2 RNA-binding regions span residues 128-249 and 325-355; these read ISYL…GKRE and DGSY…FKIS.

The protein belongs to the phytoreovirus protein P7 family.

The protein localises to the virion. The protein resides in the host cytoplasm. Functionally, probable component of the transcriptional machinery present in the inner capsid. Displays dsRNA binding activity and may play an important role in the sorting of viral RNA and virion assembly. Together with the RNA-directed RNA polymerase P1 and capping enzyme P5, forms an transcriptional complex positioned near the channels situated at each of the five-fold vertices of the core. This is Protein P7 from Alopecurus aequalis (Barnyard grass).